Here is a 304-residue protein sequence, read N- to C-terminus: Ribosomal RNA small subunit methyltransferase H (304 aa).

Residues 36–38 (CGH), D55, F81, D102, and Q109 each bind S-adenosyl-L-methionine.

This sequence belongs to the methyltransferase superfamily. RsmH family.

It localises to the cytoplasm. It catalyses the reaction cytidine(1402) in 16S rRNA + S-adenosyl-L-methionine = N(4)-methylcytidine(1402) in 16S rRNA + S-adenosyl-L-homocysteine + H(+). Its function is as follows. Specifically methylates the N4 position of cytidine in position 1402 (C1402) of 16S rRNA. The chain is Ribosomal RNA small subunit methyltransferase H from Onion yellows phytoplasma (strain OY-M).